Here is a 267-residue protein sequence, read N- to C-terminus: 4-hydroxy-tetrahydrodipicolinate reductase (267 aa).

10 to 15 (GCLGKQ) lines the NAD(+) pocket. Position 37 (Arg37) interacts with NADP(+). Residues 99-101 (GTT) and 122-125 (TTNV) contribute to the NAD(+) site. Catalysis depends on His154, which acts as the Proton donor/acceptor. His155 provides a ligand contact to (S)-2,3,4,5-tetrahydrodipicolinate. Lys158 acts as the Proton donor in catalysis. (S)-2,3,4,5-tetrahydrodipicolinate is bound at residue 164–165 (GT).

It belongs to the DapB family.

It is found in the cytoplasm. It carries out the reaction (S)-2,3,4,5-tetrahydrodipicolinate + NAD(+) + H2O = (2S,4S)-4-hydroxy-2,3,4,5-tetrahydrodipicolinate + NADH + H(+). The catalysed reaction is (S)-2,3,4,5-tetrahydrodipicolinate + NADP(+) + H2O = (2S,4S)-4-hydroxy-2,3,4,5-tetrahydrodipicolinate + NADPH + H(+). It functions in the pathway amino-acid biosynthesis; L-lysine biosynthesis via DAP pathway; (S)-tetrahydrodipicolinate from L-aspartate: step 4/4. Functionally, catalyzes the conversion of 4-hydroxy-tetrahydrodipicolinate (HTPA) to tetrahydrodipicolinate. The sequence is that of 4-hydroxy-tetrahydrodipicolinate reductase from Ehrlichia chaffeensis (strain ATCC CRL-10679 / Arkansas).